A 126-amino-acid polypeptide reads, in one-letter code: Small ribosomal subunit protein uS13 (126 aa).

The disordered stretch occupies residues 95–126 (NLPVHGQRTHTNARTRKGPRRAIAGKKKAGKK).

The protein belongs to the universal ribosomal protein uS13 family. Part of the 30S ribosomal subunit. Forms a loose heterodimer with protein S19. Forms two bridges to the 50S subunit in the 70S ribosome.

Functionally, located at the top of the head of the 30S subunit, it contacts several helices of the 16S rRNA. In the 70S ribosome it contacts the 23S rRNA (bridge B1a) and protein L5 of the 50S subunit (bridge B1b), connecting the 2 subunits; these bridges are implicated in subunit movement. Contacts the tRNAs in the A and P-sites. The chain is Small ribosomal subunit protein uS13 from Frankia casuarinae (strain DSM 45818 / CECT 9043 / HFP020203 / CcI3).